The primary structure comprises 185 residues: MNSDLTSFDKIEQKIGGSRKTSNYIIGGMLTIGGIGFLLASISSYTGKDLLPLGNPSTLLFIPQGIIMGAYGVVANLLNFYLWYMVYINFGSGSNSFNKSSKSVEIKRKGLFKDIDVKLNFDEIKSVKLDISEGFNPRRRIALVLKGRKKPLPLSGAGELKPLLQVEEEGARLAKFLNVNLEGLK.

Transmembrane regions (helical) follow at residues 24–44 (YIIGGMLTIGGIGFLLASISS) and 66–86 (IIMGAYGVVANLLNFYLWYMV).

It belongs to the Ycf4 family.

The protein localises to the cellular thylakoid membrane. Seems to be required for the assembly of the photosystem I complex. The polypeptide is Photosystem I assembly protein Ycf4 (Prochlorococcus marinus (strain MIT 9312)).